The following is a 735-amino-acid chain: Muskelin (735 aa).

Residue alanine 2 is modified to N-acetylalanine. The region spanning 172–204 (REQEAIRLCLKHFRQHNYTEAFESLQKKTKIAL) is the LisH domain. The region spanning 206–258 (HPMLTDMHDKLVLKGDFDACEELIEKAVNDGLFNQYISQQEYKPRWSQIIPKS) is the CTLH domain. Kelch repeat units follow at residues 284–330 (TVYL…SCHK), 339–391 (QIYT…FDHQ), 400–458 (MIYT…SRIG), 469–515 (CLYV…TGFT), 526–578 (EIHV…SLQE), and 597–651 (VHYL…AQMD). The segment at 701–735 (DHTYAQRTQLFDTLVNFFPDSMTPPKGNLVDLITL) is important for location in the cytosol.

In terms of assembly, homodimer; may form higher oligomers. Identified in the CTLH complex that contains GID4, RANBP9 and/or RANBP10, MKLN1, MAEA, RMND5A (or alternatively its paralog RMND5B), GID8, ARMC8, WDR26 and YPEL5. Within this complex, MAEA, RMND5A (or alternatively its paralog RMND5B), GID8, WDR26, and RANBP9 and/or RANBP10 form the catalytic core, while GID4, MKLN1, ARMC8 and YPEL5 have ancillary roles. Interacts with RANBP9. Part of a complex consisting of RANBP9, MKLN1 and GID8. Interacts with GABRA1. Interacts with the C-terminal tail of PTGER3. As to expression, detected in brain, especially in hippocampus and cerebellum (at protein level).

The protein localises to the cytoplasm. It is found in the cytosol. The protein resides in the nucleus. Its subcellular location is the nucleoplasm. It localises to the cell projection. The protein localises to the ruffle. It is found in the cell cortex. The protein resides in the synapse. Its subcellular location is the postsynapse. Component of the CTLH E3 ubiquitin-protein ligase complex that selectively accepts ubiquitin from UBE2H and mediates ubiquitination and subsequent proteasomal degradation of the transcription factor HBP1. Required for internalization of the GABA receptor GABRA1 from the cell membrane via endosomes and subsequent GABRA1 degradation. Acts as a mediator of cell spreading and cytoskeletal responses to the extracellular matrix component THBS1. The protein is Muskelin (Mkln1) of Mus musculus (Mouse).